A 413-amino-acid polypeptide reads, in one-letter code: Elongation factor 1-alpha (413 aa).

The tr-type G domain maps to 5–211; the sequence is KTHMNLAFIG…DALDEPDKPV (207 aa). Residues 14-21 form a G1 region; it reads GHVDHGKS. 14–21 is a binding site for GTP; sequence GHVDHGKS. Mg(2+) is bound at residue Ser-21. The segment at 60–64 is G2; it reads GVTID. The G3 stretch occupies residues 81 to 84; the sequence is DCPG. GTP contacts are provided by residues 81–85 and 136–139; these read DCPGH and NKMD. The segment at 136–139 is G4; it reads NKMD. Residues 175 to 177 form a G5 region; the sequence is SAF.

The protein belongs to the TRAFAC class translation factor GTPase superfamily. Classic translation factor GTPase family. EF-Tu/EF-1A subfamily.

The protein localises to the cytoplasm. The enzyme catalyses GTP + H2O = GDP + phosphate + H(+). In terms of biological role, GTP hydrolase that promotes the GTP-dependent binding of aminoacyl-tRNA to the A-site of ribosomes during protein biosynthesis. The polypeptide is Elongation factor 1-alpha (Methanosphaera stadtmanae (strain ATCC 43021 / DSM 3091 / JCM 11832 / MCB-3)).